A 253-amino-acid polypeptide reads, in one-letter code: 5'/3'-nucleotidase SurE (253 aa).

A divalent metal cation is bound by residues aspartate 8, aspartate 9, serine 39, and asparagine 92.

The protein belongs to the SurE nucleotidase family. A divalent metal cation serves as cofactor.

It is found in the cytoplasm. The catalysed reaction is a ribonucleoside 5'-phosphate + H2O = a ribonucleoside + phosphate. It catalyses the reaction a ribonucleoside 3'-phosphate + H2O = a ribonucleoside + phosphate. It carries out the reaction [phosphate](n) + H2O = [phosphate](n-1) + phosphate + H(+). Nucleotidase with a broad substrate specificity as it can dephosphorylate various ribo- and deoxyribonucleoside 5'-monophosphates and ribonucleoside 3'-monophosphates with highest affinity to 3'-AMP. Also hydrolyzes polyphosphate (exopolyphosphatase activity) with the preference for short-chain-length substrates (P20-25). Might be involved in the regulation of dNTP and NTP pools, and in the turnover of 3'-mononucleotides produced by numerous intracellular RNases (T1, T2, and F) during the degradation of various RNAs. This Shigella dysenteriae serotype 1 (strain Sd197) protein is 5'/3'-nucleotidase SurE.